The chain runs to 1060 residues: FACT complex subunit SPT16 (1060 aa).

Residues 458–490 (FNDDNETQKENNNNNNKRPGLSQTSNTTALKLE) form a disordered region. Polar residues predominate over residues 478–490 (LSQTSNTTALKLE). Residues 508 to 532 (NADDANSEKLRQEIQIKLHEKRLQE) adopt a coiled-coil conformation. A disordered region spans residues 977 to 1060 (QGESDEEEES…AKADRNSGFD (84 aa)). Composition is skewed to acidic residues over residues 979-990 (ESDEEEESDEES) and 997-1044 (EDPQ…EDWD). Positions 1045-1060 (ALERKAAKADRNSGFD) are enriched in basic and acidic residues.

It belongs to the peptidase M24 family. SPT16 subfamily. Forms a stable heterodimer with POB3. The SPT16-POB3 dimer weakly associates with multiple molecules of NHP6 to form the FACT complex.

Its subcellular location is the nucleus. The protein localises to the chromosome. Its function is as follows. Component of the FACT complex, a general chromatin factor that acts to reorganize nucleosomes. The FACT complex is involved in multiple processes that require DNA as a template such as mRNA elongation, DNA replication and DNA repair. During transcription elongation the FACT complex acts as a histone chaperone that both destabilizes and restores nucleosomal structure. It facilitates the passage of RNA polymerase II and transcription by promoting the dissociation of one histone H2A-H2B dimer from the nucleosome, then subsequently promotes the reestablishment of the nucleosome following the passage of RNA polymerase II. The chain is FACT complex subunit SPT16 (CDC68) from Candida albicans (strain SC5314 / ATCC MYA-2876) (Yeast).